Here is a 946-residue protein sequence, read N- to C-terminus: RIPOR family member 3 (946 aa).

Residues Ser-9, Ser-24, and Ser-340 each carry the phosphoserine modification. The residue at position 345 (Thr-345) is a Phosphothreonine. Residues Ser-351 and Ser-384 each carry the phosphoserine modification. The segment at 390–512 is disordered; the sequence is GPSLRSQSQE…GDREDGPGVA (123 aa). A compositionally biased stretch (basic and acidic residues) spans 437-446; the sequence is SIEEEAREDP. The span at 478-495 shows a compositional bias: polar residues; sequence SLPQGSLFHSGTASSSQN. The segment covering 496-508 has biased composition (basic and acidic residues); the sequence is GHEEGATGDREDG.

The protein belongs to the RIPOR family.

This Homo sapiens (Human) protein is RIPOR family member 3.